A 464-amino-acid chain; its full sequence is UPF0210 protein MA_1691 (464 aa).

The protein belongs to the UPF0210 family.

In Methanosarcina acetivorans (strain ATCC 35395 / DSM 2834 / JCM 12185 / C2A), this protein is UPF0210 protein MA_1691.